The following is a 451-amino-acid chain: MEQQPSVPRSCTNVARETPMNLNIQSTTGTRYELSVPLNETVDGLKRRISQRLKVPKERLTLLHRETRLSSGKLQDLGISDGSRLTLLPSVEAGLMSQMSRPEQSVMQALESLTETQVNDFLSGRSPLTLALRVGDHMMFVQLQLAAQQSGGSHLQHRHVITRGADAGAPPQYRTLHTSTSALSHLASCTPGSTPPTTLSPTSSTHCDAPHSSPLTTSVFRSHGEGVSPCAEQVPCSTRGTEGTSSSPSSRSRKPGAIIESFVNHAPGVFSGTFSGTLHPHCQDGAGRPRRDIGTILQILNDLLSATRHYQGMPPSLTTLRCHTQCASQARNAKATSPQSTGPQQTTHPVGHCQAQTRTCKPSGDRLRQTENRATRCKVERLQLLMHQKRLRRKARRDSRAPYHWMPTRKSSRTSSNSSTSSGEGSLEIDFEDSLWKPDVKAELNSEFVVA.

The region spanning 20–94 (MNLNIQSTTG…LTLLPSVEAG (75 aa)) is the Ubiquitin-like domain. Disordered stretches follow at residues 187–254 (ASCT…RSRK), 331–372 (RNAK…QTEN), and 388–427 (QKRL…EGSL). 3 stretches are compositionally biased toward low complexity: residues 190-205 (TPGS…TSST), 237-250 (STRG…SPSS), and 336-347 (TSPQSTGPQQTT). The span at 363–372 (SGDRLRQTEN) shows a compositional bias: basic and acidic residues. Positions 388–397 (QKRLRRKARR) are enriched in basic residues. Residues 413 to 426 (RTSSNSSTSSGEGS) are compositionally biased toward low complexity.

The protein localises to the nucleus. The protein resides in the cytoplasm. Its subcellular location is the cytosol. It localises to the nucleolus. In terms of biological role, facilitates ubiquitin-independent proteasomal degradation of polycomb protein CBX4. Plays a role in inhibiting the activity of glucokinase GCK and both glucose-induced and basal insulin secretion. The polypeptide is Midnolin-B (midn-b) (Xenopus laevis (African clawed frog)).